A 904-amino-acid chain; its full sequence is Alanine--tRNA ligase (904 aa).

Residues His603, His607, Cys707, and His711 each coordinate Zn(2+).

Belongs to the class-II aminoacyl-tRNA synthetase family. Requires Zn(2+) as cofactor.

The protein localises to the cytoplasm. It catalyses the reaction tRNA(Ala) + L-alanine + ATP = L-alanyl-tRNA(Ala) + AMP + diphosphate. Functionally, catalyzes the attachment of alanine to tRNA(Ala) in a two-step reaction: alanine is first activated by ATP to form Ala-AMP and then transferred to the acceptor end of tRNA(Ala). Also edits incorrectly charged Ser-tRNA(Ala) and Gly-tRNA(Ala) via its editing domain. The protein is Alanine--tRNA ligase of Sulfurisphaera tokodaii (strain DSM 16993 / JCM 10545 / NBRC 100140 / 7) (Sulfolobus tokodaii).